The primary structure comprises 655 residues: uncharacterized protein (655 aa).

Residues 5-25 (IIIIIFIVINFINIIISSITF) form a helical membrane-spanning segment. 2 disordered regions span residues 337–363 (NSDYNNNNNNNNNNNNNNNNNNNNNNN) and 484–525 (DKIG…SDNS). The segment covering 515-524 (DNNSIGSSDN) has biased composition (low complexity). A helical membrane pass occupies residues 588-608 (ILAVTISAIGIICVALLLTVV).

Its subcellular location is the membrane. This is an uncharacterized protein from Dictyostelium discoideum (Social amoeba).